Here is an 837-residue protein sequence, read N- to C-terminus: Mannosyl-oligosaccharide glucosidase (837 aa).

A compositionally biased stretch (basic residues) spans 1–10 (MARGERRRRA). Topologically, residues 1–38 (MARGERRRRAVPAEGVRTAERAARGGPGRRDGRGGGPR) are cytoplasmic. The disordered stretch occupies residues 1 to 39 (MARGERRRRAVPAEGVRTAERAARGGPGRRDGRGGGPRS). An Endoplasmic reticulum targeting motif is present at residues 3-9 (RGERRRR). Positions 17–33 (RTAERAARGGPGRRDGR) are enriched in basic and acidic residues. Residues 39–59 (STAGGVALAVVVLSLALGMSG) traverse the membrane as a helical; Signal-anchor for type II membrane protein segment. At 60 to 837 (RWVLAWYRAR…LVLLAMAEDY (778 aa)) the chain is on the lumenal side. The interval 76–137 (SAPPVLPADS…PGTPKLRHTC (62 aa)) is required for endoplasmic reticulum targeting. D583 serves as the catalytic Proton donor. An N-linked (GlcNAc...) asparagine glycan is attached at N657. Catalysis depends on E807, which acts as the Proton acceptor.

The protein belongs to the glycosyl hydrolase 63 family.

The protein resides in the endoplasmic reticulum membrane. The catalysed reaction is N(4)-(alpha-D-Glc-(1-&gt;2)-alpha-D-Glc-(1-&gt;3)-alpha-D-Glc-(1-&gt;3)-alpha-D-Man-(1-&gt;2)-alpha-D-Man-(1-&gt;2)-alpha-D-Man-(1-&gt;3)-[alpha-D-Man-(1-&gt;2)-alpha-D-Man-(1-&gt;3)-[alpha-D-Man-(1-&gt;2)-alpha-D-Man-(1-&gt;6)]-alpha-D-Man-(1-&gt;6)]-beta-D-Man-(1-&gt;4)-beta-D-GlcNAc-(1-&gt;4)-beta-D-GlcNAc)-L-asparaginyl-[protein] + H2O = N(4)-(alpha-D-Glc-(1-&gt;3)-alpha-D-Glc-(1-&gt;3)-alpha-D-Man-(1-&gt;2)-alpha-D-Man-(1-&gt;2)-alpha-D-Man-(1-&gt;3)-[alpha-D-Man-(1-&gt;2)-alpha-D-Man-(1-&gt;3)-[alpha-D-Man-(1-&gt;2)-alpha-D-Man-(1-&gt;6)]-alpha-D-Man-(1-&gt;6)]-beta-D-Man-(1-&gt;4)-beta-D-GlcNAc-(1-&gt;4)-beta-D-GlcNAc)-L-asparaginyl-[protein] + beta-D-glucose. The protein operates within glycan metabolism; N-glycan degradation. Its activity is regulated as follows. Inhibited by 1-deoxynojirimycin (40% inhibition) and N,N-dimethyl-deoxynojirimycin (85% inhibition). Functionally, in the context of N-glycan degradation, cleaves the distal alpha 1,2-linked glucose residue from the Glc(3)Man(9)GlcNAc(2) oligosaccharide precursor in a highly specific manner. The polypeptide is Mannosyl-oligosaccharide glucosidase (Homo sapiens (Human)).